Consider the following 291-residue polypeptide: ATP synthase gamma chain 2 (291 aa).

A disordered region spans residues 187–208; the sequence is LLPHPDKDESQDSKPNDATSRW. Residues 190–201 show a composition bias toward basic and acidic residues; it reads HPDKDESQDSKP.

The protein belongs to the ATPase gamma chain family. In terms of assembly, F-type ATPases have 2 components, CF(1) - the catalytic core - and CF(0) - the membrane proton channel. CF(1) has five subunits: alpha(3), beta(3), gamma(1), delta(1), epsilon(1). CF(0) has three main subunits: a, b and c.

It localises to the cell inner membrane. Functionally, produces ATP from ADP in the presence of a proton gradient across the membrane. The gamma chain is believed to be important in regulating ATPase activity and the flow of protons through the CF(0) complex. This is ATP synthase gamma chain 2 from Photobacterium profundum (strain SS9).